The sequence spans 168 residues: MKLTSKGRYAVTAMLDVALHAQEGPVPLADISERQGISLSYLEQLFSKLRKAGLVASVRGPGGGYRLGLKPDEIAVGMVISAVDESVDATKCHGKEGCQGGTRCLTHTLWRDLSSRISSFLDGISLGELMVDNEVQQVSDRQNIDAALNNGLVTNSKLTNSVGVNVRF.

Residues 2-131 (KLTSKGRYAV…DGISLGELMV (130 aa)) form the HTH rrf2-type domain. Residues 28–51 (LADISERQGISLSYLEQLFSKLRK) constitute a DNA-binding region (H-T-H motif). [2Fe-2S] cluster contacts are provided by cysteine 92, cysteine 98, and cysteine 104.

It depends on [2Fe-2S] cluster as a cofactor.

Its function is as follows. Regulates the transcription of several operons and genes involved in the biogenesis of Fe-S clusters and Fe-S-containing proteins. In Aliivibrio salmonicida (strain LFI1238) (Vibrio salmonicida (strain LFI1238)), this protein is HTH-type transcriptional regulator IscR.